We begin with the raw amino-acid sequence, 91 residues long: Acyl carrier protein (91 aa).

One can recognise a Carrier domain in the interval 6–81 (EEIIAELGQI…DIVAYIQKLE (76 aa)). Serine 41 bears the O-(pantetheine 4'-phosphoryl)serine mark.

Belongs to the acyl carrier protein (ACP) family. 4'-phosphopantetheine is transferred from CoA to a specific serine of apo-ACP by AcpS. This modification is essential for activity because fatty acids are bound in thioester linkage to the sulfhydryl of the prosthetic group.

Its subcellular location is the cytoplasm. It participates in lipid metabolism; fatty acid biosynthesis. Functionally, carrier of the growing fatty acid chain in fatty acid biosynthesis. The sequence is that of Acyl carrier protein from Rhodococcus erythropolis (strain PR4 / NBRC 100887).